We begin with the raw amino-acid sequence, 143 residues long: Transcriptional regulator MraZ (143 aa).

SpoVT-AbrB domains lie at 5–47 (EYRH…PQSE) and 76–119 (ASEC…SKTL).

The protein belongs to the MraZ family. As to quaternary structure, forms oligomers.

It is found in the cytoplasm. It localises to the nucleoid. This is Transcriptional regulator MraZ from Shouchella clausii (strain KSM-K16) (Alkalihalobacillus clausii).